The following is a 344-amino-acid chain: WW domain binding protein 1-like (344 aa).

A helical membrane pass occupies residues 42 to 62; the sequence is LWWFWLVWTIIIILSCCCVCH. Disordered stretches follow at residues 132–250 and 302–321; these read LLPP…RFTG and CLSS…PRPP. Residues 145–173 show a composition bias toward low complexity; it reads PGADQPQGSQGAQSSPLSGPSRSSTRPPS. A Phosphoserine modification is found at Ser173. The span at 212–228 shows a compositional bias: basic and acidic residues; it reads LDRDSECKEELLKDSSS.

It is found in the membrane. This Rattus norvegicus (Rat) protein is WW domain binding protein 1-like (Wbp1l).